The sequence spans 515 residues: MAMRELSQLNRDSDGDEEVWVKHYSSNHQILLVGEGDFSFSHSLATLFGSASNICASSLDSYDVVVRKYKKARSNLKTLKRLGALLLHGVDATTLHFHPDLRYRRFDRVIFNFPHAGFHGRESDSSLIRKHRELVFGFFNGASRLLRANGEVHVSHKNKAPFSEWNLEELASRCFLVLIQRVAFEKNNYPGYENKRGDGRRCDQPFLLGECSTFKFRFSRVAKELYAEKVRSREVKERESMYPEAILNKQPVSFDHRYRLQTEFEAIAGTITLGKSKILWLSQEKGHLHWIFVTTKNVDVYSSKIPVFLICTLESRQRDIACFVKTFQFKLVKNHYPNTLTAGVEFLVKFITGKYEECQQVTYLRKNFSGYGDGNKQRIVLKMDMSDEKSMKKAMKIASAKPGVRSVSIQGQNDQLVLLGEGIDLAELTRELKKKVCMTTIITVQAAPPQQPPQPHPMGQYNQMPPARRCTCEIPNSGFCGFCRSMSQPNYQVVPSPYYPPMLYCRDETDGCRIL.

The region spanning 376–444 (KQRIVLKMDM…KVCMTTIITV (69 aa)) is the HMA domain. At cysteine 512 the chain carries Cysteine methyl ester. Residue cysteine 512 is the site of S-farnesyl cysteine attachment. Residues 513–515 (RIL) constitute a propeptide, removed in mature form.

This sequence belongs to the HIPP family.

Heavy-metal-binding protein. The sequence is that of Heavy metal-associated isoprenylated plant protein 41 from Arabidopsis thaliana (Mouse-ear cress).